A 107-amino-acid chain; its full sequence is NADH dehydrogenase [ubiquinone] 1 beta subcomplex subunit 10-A (107 aa).

The disordered stretch occupies residues 1–23 (MGRKKGLPEFEESAPDGFDPENP).

This sequence belongs to the complex I NDUFB10 subunit family. As to quaternary structure, complex I is composed of at least 49 different subunits.

The protein localises to the mitochondrion inner membrane. Accessory subunit of the mitochondrial membrane respiratory chain NADH dehydrogenase (Complex I), that is believed not to be involved in catalysis. Complex I functions in the transfer of electrons from NADH to the respiratory chain. The immediate electron acceptor for the enzyme is believed to be ubiquinone. The protein is NADH dehydrogenase [ubiquinone] 1 beta subcomplex subunit 10-A of Arabidopsis thaliana (Mouse-ear cress).